The following is a 193-amino-acid chain: MKLYTKTGDKGQTGLVGGRTDKDSLRVESYGTIDELNSFIGLALAELSGQPGFEDLTAELLTIQHELFDCGGDLAIVTERKDYKLTEESVSFLETRIDAYTAEAPELKKFILPGGSKCASLLHIARTITRRAERRVVALMKSEEIHETVLRYLNRLSDYFFAAARVVNARSGIGDVEYERSAIVFRDRNSSES.

ATP is bound by residues 5-13 (TKTGDKGQT), lysine 22, 130-135 (RRAERR), and asparagine 154.

Belongs to the Cob(I)alamin adenosyltransferase family. Homotrimer.

Its subcellular location is the cytoplasm. The enzyme catalyses 2 cob(II)yrinate a,c diamide + reduced [electron-transfer flavoprotein] + 2 ATP = 2 adenosylcob(III)yrinate a,c-diamide + 2 triphosphate + oxidized [electron-transfer flavoprotein] + 3 H(+). It carries out the reaction 2 cob(II)alamin + reduced [electron-transfer flavoprotein] + 2 ATP = 2 adenosylcob(III)alamin + 2 triphosphate + oxidized [electron-transfer flavoprotein] + 3 H(+). It participates in cofactor biosynthesis; adenosylcobalamin biosynthesis; adenosylcobalamin from cob(II)yrinate a,c-diamide: step 2/7. This is Corrinoid adenosyltransferase (yvqK) from Bacillus subtilis (strain 168).